We begin with the raw amino-acid sequence, 238 residues long: Probable solute-binding protein AdeT2 (238 aa).

Belongs to the bacterial solute-binding protein 7 family.

Its function is as follows. Mediates antimicrobial resistance via active efflux. Contributes to resistance to antibiotics such as chloramphenicol, erythromycin and novobiocin. May be part of a tripartite ATP-independent periplasmic (TRAP) transport system. In Acinetobacter baumannii, this protein is Probable solute-binding protein AdeT2.